We begin with the raw amino-acid sequence, 227 residues long: Urease subunit gamma/beta (227 aa).

The segment at 1–101 (MRLTPTERDR…LAVVADPVGG (101 aa)) is urease gamma. A urease beta region spans residues 102 to 227 (GGLGDDAPGA…AACGYLGADR (126 aa)).

The protein in the N-terminal section; belongs to the urease gamma subunit family. It in the C-terminal section; belongs to the urease beta subunit family. In terms of assembly, heterohexamer of 3 UreC (alpha) and 3 UreAB (gamma/beta) subunits.

It is found in the cytoplasm. It carries out the reaction urea + 2 H2O + H(+) = hydrogencarbonate + 2 NH4(+). Its pathway is nitrogen metabolism; urea degradation; CO(2) and NH(3) from urea (urease route): step 1/1. This chain is Urease subunit gamma/beta, found in Streptomyces coelicolor (strain ATCC BAA-471 / A3(2) / M145).